The chain runs to 154 residues: Snaclec lebecin subunit beta (154 aa).

Positions 1–23 (MGRIIFVSFGLLVVFLSLSGTGA) are cleaved as a signal peptide. 3 disulfides stabilise this stretch: Cys-25–Cys-36, Cys-53–Cys-150, and Cys-125–Cys-142. Residues 32–151 (DEEHCYYVFF…CGDDYPFVCK (120 aa)) form the C-type lectin domain. Asn-139 is a glycosylation site (N-linked (GlcNAc...) asparagine).

Heterodimer with the alpha subunit (AC W5XDM0); disulfide-linked. In terms of tissue distribution, expressed by the venom gland.

Its subcellular location is the secreted. In terms of biological role, inhibits human breast cancer cells (MDA-MB231) migration and proliferation, as well as their adhesion to fibrinogen and fibronectin. This inhibition may be due to the binding to receptors of the integrin family, probably alpha-v/beta-3 (ITGAV/ITGB3) (40% inhibition of cell adhesion) and alpha-5/beta-1 (ITGA5/ITGB1) (by comparison with lebectin). The protein is Snaclec lebecin subunit beta of Macrovipera lebetinus (Levantine viper).